The following is a 60-amino-acid chain: Metallothionein (60 aa).

Residues 1–28 are beta; that stretch reads MDPCECSKTGNCTCGGSCTCKNCSCTSC. The a divalent metal cation site is built by Cys-4, Cys-6, Cys-12, Cys-14, Cys-18, Cys-20, Cys-23, Cys-25, Cys-28, Cys-32, Cys-33, Cys-35, Cys-36, Cys-40, Cys-43, Cys-47, Cys-49, Cys-54, Cys-58, and Cys-59. The tract at residues 29-60 is alpha; it reads KKSCCSCCPSGCSKCASGCVCKGKTCDTSCCQ.

This sequence belongs to the metallothionein superfamily. Type 1 family.

Functionally, metallothioneins have a high content of cysteine residues that bind various heavy metals. This chain is Metallothionein (mt), found in Gobiomorphus cotidianus (New Zealand common bully).